Here is a 250-residue protein sequence, read N- to C-terminus: Small ribosomal subunit protein uS2 (250 aa).

The protein belongs to the universal ribosomal protein uS2 family.

This Acidovorax sp. (strain JS42) protein is Small ribosomal subunit protein uS2.